Reading from the N-terminus, the 193-residue chain is MKTLIRPLVVIFVVLTAVTGLAYPAVMTVFGQAVFPSQANGSLIEKDGRAVGSALIGQPFDAPKYFWGRLSATSPMPYNASGSGGSNLGPLNPSLAEQVKARIAALRDAGTDMSTPVPVDLVTASASGLDPEITPAAAAYQVERVAKARNLSADAVAQLVAANTAGRQFGVLGEPRVNVLKLNLALDAAQAAH.

A helical transmembrane segment spans residues 7-27 (PLVVIFVVLTAVTGLAYPAVM).

The protein belongs to the KdpC family. As to quaternary structure, the system is composed of three essential subunits: KdpA, KdpB and KdpC.

Its subcellular location is the cell inner membrane. Part of the high-affinity ATP-driven potassium transport (or Kdp) system, which catalyzes the hydrolysis of ATP coupled with the electrogenic transport of potassium into the cytoplasm. This subunit acts as a catalytic chaperone that increases the ATP-binding affinity of the ATP-hydrolyzing subunit KdpB by the formation of a transient KdpB/KdpC/ATP ternary complex. The sequence is that of Potassium-transporting ATPase KdpC subunit from Burkholderia ambifaria (strain ATCC BAA-244 / DSM 16087 / CCUG 44356 / LMG 19182 / AMMD) (Burkholderia cepacia (strain AMMD)).